The chain runs to 97 residues: Co-chaperonin GroES (97 aa).

It belongs to the GroES chaperonin family. Heptamer of 7 subunits arranged in a ring. Interacts with the chaperonin GroEL.

The protein resides in the cytoplasm. In terms of biological role, together with the chaperonin GroEL, plays an essential role in assisting protein folding. The GroEL-GroES system forms a nano-cage that allows encapsulation of the non-native substrate proteins and provides a physical environment optimized to promote and accelerate protein folding. GroES binds to the apical surface of the GroEL ring, thereby capping the opening of the GroEL channel. In Serratia proteamaculans (strain 568), this protein is Co-chaperonin GroES.